Here is a 413-residue protein sequence, read N- to C-terminus: Multifunctional CCA protein (413 aa).

ATP is bound by residues G8 and R11. 2 residues coordinate CTP: G8 and R11. Positions 21 and 23 each coordinate Mg(2+). Residues R91, R137, and R140 each contribute to the ATP site. CTP is bound by residues R91, R137, and R140. One can recognise an HD domain in the interval 228-329 (TGKHTLLSLK…VSLFDKGDFW (102 aa)).

This sequence belongs to the tRNA nucleotidyltransferase/poly(A) polymerase family. Bacterial CCA-adding enzyme type 1 subfamily. As to quaternary structure, monomer. Can also form homodimers and oligomers. The cofactor is Mg(2+). Ni(2+) serves as cofactor.

It catalyses the reaction a tRNA precursor + 2 CTP + ATP = a tRNA with a 3' CCA end + 3 diphosphate. It carries out the reaction a tRNA with a 3' CCA end + 2 CTP + ATP = a tRNA with a 3' CCACCA end + 3 diphosphate. Its function is as follows. Catalyzes the addition and repair of the essential 3'-terminal CCA sequence in tRNAs without using a nucleic acid template. Adds these three nucleotides in the order of C, C, and A to the tRNA nucleotide-73, using CTP and ATP as substrates and producing inorganic pyrophosphate. tRNA 3'-terminal CCA addition is required both for tRNA processing and repair. Also involved in tRNA surveillance by mediating tandem CCA addition to generate a CCACCA at the 3' terminus of unstable tRNAs. While stable tRNAs receive only 3'-terminal CCA, unstable tRNAs are marked with CCACCA and rapidly degraded. The polypeptide is Multifunctional CCA protein (Shewanella denitrificans (strain OS217 / ATCC BAA-1090 / DSM 15013)).